Consider the following 508-residue polypeptide: Photosystem II CP47 reaction center protein (508 aa).

A run of 6 helical transmembrane segments spans residues 21-36 (SVHIMHTALVSGWAGS), 101-115 (IVFSGLCFLAAIWHW), 140-156 (GIHLFLAGVACFGFGAF), 203-218 (IAAGTLGILAGLFHLS), 237-252 (VLSSSIAAVFFAAFVV), and 457-472 (TFALLFFFGHIWHGAR).

It belongs to the PsbB/PsbC family. PsbB subfamily. In terms of assembly, PSII is composed of 1 copy each of membrane proteins PsbA, PsbB, PsbC, PsbD, PsbE, PsbF, PsbH, PsbI, PsbJ, PsbK, PsbL, PsbM, PsbT, PsbX, PsbY, PsbZ, Psb30/Ycf12, at least 3 peripheral proteins of the oxygen-evolving complex and a large number of cofactors. It forms dimeric complexes. It depends on Binds multiple chlorophylls. PSII binds additional chlorophylls, carotenoids and specific lipids. as a cofactor.

The protein localises to the plastid. It is found in the chloroplast thylakoid membrane. In terms of biological role, one of the components of the core complex of photosystem II (PSII). It binds chlorophyll and helps catalyze the primary light-induced photochemical processes of PSII. PSII is a light-driven water:plastoquinone oxidoreductase, using light energy to abstract electrons from H(2)O, generating O(2) and a proton gradient subsequently used for ATP formation. In Zea mays (Maize), this protein is Photosystem II CP47 reaction center protein.